An 84-amino-acid polypeptide reads, in one-letter code: U21-theraphotoxin-Cg1a 1 (84 aa).

The signal sequence occupies residues 1–21; the sequence is MKVSVLITLAVLGVMFLLTSA. The propeptide occupies 22-47; it reads EERGSDQMDSPAWLKSMEIIFQSEER. 3 disulfides stabilise this stretch: cysteine 49–cysteine 63, cysteine 56–cysteine 68, and cysteine 62–cysteine 76. At valine 82 the chain carries Valine amide.

The protein belongs to the neurotoxin 10 (Hwtx-1) family. 05 (F4a) subfamily. As to expression, expressed by the venom gland.

Its subcellular location is the secreted. Its function is as follows. Probable ion channel inhibitor. This is U21-theraphotoxin-Cg1a 1 from Chilobrachys guangxiensis (Chinese earth tiger tarantula).